The following is a 524-amino-acid chain: G1/S-specific cyclin-E (524 aa).

The interval 1–155 (MAGRKSSRTA…EESHEMVRLE (155 aa)) is disordered. The span at 18–47 (KPERKSAILSPHDELRERLLETAIDMKENI) shows a compositional bias: basic and acidic residues. Residues 48 to 62 (PQRNTRNSSVGSQKS) are compositionally biased toward polar residues. 3 stretches are compositionally biased toward basic and acidic residues: residues 63–78 (DCSETRKRRSTKEGPA), 86–95 (KHRNGSREDS), and 146–155 (EESHEMVRLE).

It belongs to the cyclin family. Cyclin E subfamily. Interacts with a member of the CDK2/CDK protein kinases to form a serine/threonine kinase holoenzyme complex. The cyclin subunit imparts substrate specificity to the complex. Expressed dynamically in proliferating cells throughout development. Detectable in larval blast cells undergoing active proliferation that give rise to all tissue types, including germline, intestine, hypodermis, neurons, and muscle.

It is found in the nucleus. It localises to the cytoplasm. The protein resides in the cytoskeleton. Its subcellular location is the microtubule organizing center. The protein localises to the centrosome. It is found in the centriole. Functionally, essential for the control of the cell cycle at the G1/S (start) transition. In association with cdk-2, regulates proliferation, quiescent state and cell fate during the development of several cell lineages. In the embryo, initiates the establishment of cell polarity through the recruitment of the centrosomal proteins spd-2 and spd-5 during prophase. During the development of the vulva, controls the onset of vulval cell terminal differentiation by controlling the duration of G1 phase. During hypoderm development at early larval stages, controls syncytial fate of seam cell daughter cells. Involved in the progression of cell division in the intestinal lineage in larvae, and in particular in endoreplication, a specific growth pathway in the intestinal epithelium, required for feeding and gut development in growing larvae. By controlling the activity of translational repressor gld-1, regulates the pool of germline stem cells and the size of the mitotic zone by preventing entry into meiosis. In addition, repression of expression by gld-1 prevents mitosis re-entry in meiotic germline cells. The sequence is that of G1/S-specific cyclin-E from Caenorhabditis elegans.